A 312-amino-acid polypeptide reads, in one-letter code: Beta-ketoacyl-[acyl-carrier-protein] synthase III (312 aa).

Residues Cys-112 and His-237 contribute to the active site. An ACP-binding region spans residues 238 to 242 (QANIR). The active site involves Asn-267.

The protein belongs to the thiolase-like superfamily. FabH family. As to quaternary structure, homodimer.

The protein resides in the cytoplasm. The catalysed reaction is malonyl-[ACP] + acetyl-CoA + H(+) = 3-oxobutanoyl-[ACP] + CO2 + CoA. It participates in lipid metabolism; fatty acid biosynthesis. In terms of biological role, catalyzes the condensation reaction of fatty acid synthesis by the addition to an acyl acceptor of two carbons from malonyl-ACP. Catalyzes the first condensation reaction which initiates fatty acid synthesis and may therefore play a role in governing the total rate of fatty acid production. Possesses both acetoacetyl-ACP synthase and acetyl transacylase activities. Its substrate specificity determines the biosynthesis of branched-chain and/or straight-chain of fatty acids. In Bacillus pumilus (strain SAFR-032), this protein is Beta-ketoacyl-[acyl-carrier-protein] synthase III.